Here is a 395-residue protein sequence, read N- to C-terminus: Nicotinamide/nicotinic acid mononucleotide adenylyltransferase 2 (395 aa).

2 disordered regions span residues 1–34 (MDPTKAPDFKPPQPNEELQPPPDPTHTIPKSGPI) and 62–102 (KKNA…NGID). Residues 9–24 (FKPPQPNEELQPPPDP) are compositionally biased toward pro residues. Ser85, Ser89, and Ser90 each carry phosphoserine. Residues Ser167 and Phe168 each coordinate NAD(+). ATP contacts are provided by His175 and Arg209. NAD(+)-binding residues include Thr247, Gly282, Asp284, Trp295, Arg314, and Asn345. 350–353 (TKVR) lines the ATP pocket.

The protein belongs to the eukaryotic NMN adenylyltransferase family. Requires Co(2+) as cofactor.

It is found in the nucleus. It carries out the reaction beta-nicotinamide D-ribonucleotide + ATP + H(+) = diphosphate + NAD(+). The catalysed reaction is nicotinate beta-D-ribonucleotide + ATP + H(+) = deamido-NAD(+) + diphosphate. Its pathway is cofactor biosynthesis; NAD(+) biosynthesis; deamido-NAD(+) from nicotinate D-ribonucleotide: step 1/1. It functions in the pathway cofactor biosynthesis; NAD(+) biosynthesis; NAD(+) from nicotinamide D-ribonucleotide: step 1/1. Catalyzes the formation of NAD(+) from nicotinamide mononucleotide (NMN) and ATP. Can also use the deamidated form; nicotinic acid mononucleotide (NaMN) as substrate to form deamido-NAD(+) (NaAD). Key enzyme in both de novo and salvage pathways for NAD(+) biosynthesis. Predominantly acts in the salvage pathways via NMN. The sequence is that of Nicotinamide/nicotinic acid mononucleotide adenylyltransferase 2 from Saccharomyces cerevisiae (strain ATCC 204508 / S288c) (Baker's yeast).